Here is a 131-residue protein sequence, read N- to C-terminus: Arsenate reductase (131 aa).

Residues cysteine 10, cysteine 82, and cysteine 89 each act as nucleophile in the active site. 2 cysteine pairs are disulfide-bonded: cysteine 10–cysteine 82 and cysteine 82–cysteine 89.

Belongs to the low molecular weight phosphotyrosine protein phosphatase family. Thioredoxin-coupled ArsC subfamily.

Its subcellular location is the cytoplasm. The enzyme catalyses arsenate + [thioredoxin]-dithiol + H(+) = arsenite + [thioredoxin]-disulfide + H2O. Its function is as follows. Catalyzes the reduction of arsenate [As(V)] to arsenite [As(III)]. This chain is Arsenate reductase, found in Staphylococcus xylosus.